The chain runs to 446 residues: Deoxyguanosinetriphosphate triphosphohydrolase-like protein (446 aa).

A disordered region spans residues 1–28; sequence MSSSVWQERRHGEDKQRRNDHRSPFQRD. Basic and acidic residues predominate over residues 7–28; sequence QERRHGEDKQRRNDHRSPFQRD. One can recognise an HD domain in the interval 59-252; it reads RLTHSLEVSQ…MELADDIAYA (194 aa).

It belongs to the dGTPase family. Type 2 subfamily.

This is Deoxyguanosinetriphosphate triphosphohydrolase-like protein from Shewanella sp. (strain MR-4).